We begin with the raw amino-acid sequence, 107 residues long: MRDMMGMMKQAKELQAKMKAMQDEIATMEASASSGGGLVTITLSGKGTLSALKIDPSLMKEEEVEILEDLIIAAHNDAKAKLEAAMAEKTQSLTAGLPIPPGFKLPF.

The protein belongs to the YbaB/EbfC family. As to quaternary structure, homodimer.

The protein localises to the cytoplasm. It is found in the nucleoid. Functionally, binds to DNA and alters its conformation. May be involved in regulation of gene expression, nucleoid organization and DNA protection. This chain is Nucleoid-associated protein Oant_0022, found in Brucella anthropi (strain ATCC 49188 / DSM 6882 / CCUG 24695 / JCM 21032 / LMG 3331 / NBRC 15819 / NCTC 12168 / Alc 37) (Ochrobactrum anthropi).